A 346-amino-acid chain; its full sequence is Flap endonuclease 1 (346 aa).

Positions 1–102 (MGVTELGKLI…AEIEERRKAK (102 aa)) are N-domain. The Mg(2+) site is built by D31, D84, E156, E158, D177, D179, and D239. An I-domain region spans residues 120–261 (EVAKYAKRAI…RALKLIWEFG (142 aa)).

This sequence belongs to the XPG/RAD2 endonuclease family. FEN1 subfamily. As to quaternary structure, interacts with PCNA. PCNA stimulates the nuclease activity without altering cleavage specificity. The cofactor is Mg(2+).

Functionally, structure-specific nuclease with 5'-flap endonuclease and 5'-3' exonuclease activities involved in DNA replication and repair. During DNA replication, cleaves the 5'-overhanging flap structure that is generated by displacement synthesis when DNA polymerase encounters the 5'-end of a downstream Okazaki fragment. Binds the unpaired 3'-DNA end and kinks the DNA to facilitate 5' cleavage specificity. Cleaves one nucleotide into the double-stranded DNA from the junction in flap DNA, leaving a nick for ligation. Also involved in the base excision repair (BER) pathway. Acts as a genome stabilization factor that prevents flaps from equilibrating into structures that lead to duplications and deletions. Also possesses 5'-3' exonuclease activity on nicked or gapped double-stranded DNA. In Pyrobaculum arsenaticum (strain DSM 13514 / JCM 11321 / PZ6), this protein is Flap endonuclease 1.